The sequence spans 241 residues: GTP cyclohydrolase III (241 aa).

Belongs to the archaeal-type GTP cyclohydrolase family.

It carries out the reaction GTP + 3 H2O = 2-amino-5-formylamino-6-(5-phospho-D-ribosylamino)pyrimidin-4(3H)-one + 2 phosphate + 2 H(+). In terms of biological role, catalyzes the formation of 2-amino-5-formylamino-6-ribofuranosylamino-4(3H)-pyrimidinone ribonucleotide monophosphate and inorganic phosphate from GTP. Also has an independent pyrophosphate phosphohydrolase activity. In Aeropyrum pernix (strain ATCC 700893 / DSM 11879 / JCM 9820 / NBRC 100138 / K1), this protein is GTP cyclohydrolase III.